Reading from the N-terminus, the 64-residue chain is Large ribosomal subunit protein bL32 (64 aa).

Residues 1–20 form a disordered region; sequence MALPKYKTSRANTHSRRANW.

It belongs to the bacterial ribosomal protein bL32 family.

This Bifidobacterium adolescentis (strain ATCC 15703 / DSM 20083 / NCTC 11814 / E194a) protein is Large ribosomal subunit protein bL32.